A 124-amino-acid chain; its full sequence is Small ribosomal subunit protein uS12 (124 aa).

Basic residues predominate over residues 11–20; sequence GRKRLKKKSK. The disordered stretch occupies residues 11–30; it reads GRKRLKKKSKSPALENNPQK. 3-methylthioaspartic acid is present on aspartate 89. The interval 105-124 is disordered; the sequence is EGVANRRQSRSRYGAKKPKK. Over residues 111-124 the composition is skewed to basic residues; it reads RQSRSRYGAKKPKK.

It belongs to the universal ribosomal protein uS12 family. Part of the 30S ribosomal subunit. Contacts proteins S8 and S17. May interact with IF1 in the 30S initiation complex.

In terms of biological role, with S4 and S5 plays an important role in translational accuracy. Functionally, interacts with and stabilizes bases of the 16S rRNA that are involved in tRNA selection in the A site and with the mRNA backbone. Located at the interface of the 30S and 50S subunits, it traverses the body of the 30S subunit contacting proteins on the other side and probably holding the rRNA structure together. The combined cluster of proteins S8, S12 and S17 appears to hold together the shoulder and platform of the 30S subunit. This is Small ribosomal subunit protein uS12 from Kosmotoga olearia (strain ATCC BAA-1733 / DSM 21960 / TBF 19.5.1).